Here is a 320-residue protein sequence, read N- to C-terminus: Nucleotide-binding protein Psyc_0118 (320 aa).

32 to 39 (GRSGSGKT) serves as a coordination point for ATP. Position 82–85 (82–85 (DIRT)) interacts with GTP.

This sequence belongs to the RapZ-like family.

Displays ATPase and GTPase activities. The polypeptide is Nucleotide-binding protein Psyc_0118 (Psychrobacter arcticus (strain DSM 17307 / VKM B-2377 / 273-4)).